The sequence spans 305 residues: NAD kinase (305 aa).

Residue D84 is the Proton acceptor of the active site. NAD(+) contacts are provided by residues 84-85, 159-160, H170, R187, D189, 200-205, and Q260; these read DG, NE, and TAYSLS.

This sequence belongs to the NAD kinase family. It depends on a divalent metal cation as a cofactor.

It is found in the cytoplasm. The catalysed reaction is NAD(+) + ATP = ADP + NADP(+) + H(+). Its function is as follows. Involved in the regulation of the intracellular balance of NAD and NADP, and is a key enzyme in the biosynthesis of NADP. Catalyzes specifically the phosphorylation on 2'-hydroxyl of the adenosine moiety of NAD to yield NADP. The polypeptide is NAD kinase (Pasteurella multocida (strain Pm70)).